We begin with the raw amino-acid sequence, 58 residues long: MRCLPVVVFLLLLLSAAAAPGVGSKTERLPGLTSSGDSDESLPFLNTICCWSGACCGG.

Residues 1–18 (MRCLPVVVFLLLLLSAAA) form the signal peptide. A propeptide spanning residues 19–28 (APGVGSKTER) is cleaved from the precursor.

This sequence belongs to the conotoxin T superfamily. Post-translationally, contains 2 disulfide bonds that can be either 'C1-C3, C2-C4' or 'C1-C4, C2-C3', since these disulfide connectivities have been observed for conotoxins with cysteine framework V (for examples, see AC P0DQQ7 and AC P81755). As to expression, expressed by the venom duct.

It localises to the secreted. Probable neurotoxin. The sequence is that of Conotoxin Im5.4 from Conus imperialis (Imperial cone).